Consider the following 337-residue polypeptide: Glyceraldehyde-3-phosphate dehydrogenase 2 (337 aa).

NADP(+) is bound by residues 11–12 (RI), Asp35, Arg80, and Thr122. D-glyceraldehyde 3-phosphate-binding positions include 153–155 (SCT), Thr184, Arg199, 212–213 (TG), and Arg235. Cys154 serves as the catalytic Nucleophile. Asn317 is a binding site for NADP(+).

As to quaternary structure, homotetramer.

It is found in the cytoplasm. It carries out the reaction D-glyceraldehyde 3-phosphate + phosphate + NADP(+) = (2R)-3-phospho-glyceroyl phosphate + NADPH + H(+). The enzyme catalyses D-glyceraldehyde 3-phosphate + phosphate + NAD(+) = (2R)-3-phospho-glyceroyl phosphate + NADH + H(+). The protein operates within carbohydrate biosynthesis; Calvin cycle. Functionally, gap2 has a major role in carbon fixation as a component of the Calvin cycle. Catalyzes the oxidative phosphorylation of glyceraldehyde 3-phosphate (G3P) to 1,3-bisphosphoglycerate (BPG) using the cofactor NADP. The first reaction step involves the formation of a hemiacetal intermediate between G3P and a cysteine residue, and this hemiacetal intermediate is then oxidized to a thioester, with concomitant reduction of NADP to NADPH. The reduced NADPH is then exchanged with the second NAD, and the thioester is attacked by a nucleophilic inorganic phosphate to produce BPG. This Nostoc sp. (strain PCC 7120 / SAG 25.82 / UTEX 2576) protein is Glyceraldehyde-3-phosphate dehydrogenase 2 (gap2).